Here is a 203-residue protein sequence, read N- to C-terminus: Twist-related protein 1 (203 aa).

A compositionally biased stretch (low complexity) spans 1–18 (MMQDVSSSPVSPADDSLS). Residues 1-107 (MMQDVSSSPV…GGSPQSCEEL (107 aa)) form a disordered region. Over residues 34–43 (RGGRKRRSSR) the composition is skewed to basic residues. Gly residues-rich tracts occupy residues 46 to 65 (AGGGAGPGGAASGGAGGGDE) and 80 to 100 (GCGGGGGGGAGGGGSSSGGGS). One can recognise a bHLH domain in the interval 109–160 (TQRVMANVRERQRTQSLNEPFAALRKIIPTLPSDKLSKIQTLKLAARYIDFL). The segment at 162–192 (RVLQSDELDSKTASCSYVAHEWLSYAFSVWR) is sufficient for transactivation activity.

As to quaternary structure, efficient DNA binding requires dimerization with another bHLH protein. Homodimer or heterodimer with E proteins such as TCF3. ID1 binds preferentially to TCF3 but does not interact efficiently with TWIST1 so ID1 levels control the amount of TCF3 available to dimerize with TWIST and thus determine the type of dimer formed.

The protein localises to the nucleus. In terms of biological role, acts as a transcriptional regulator. Inhibits myogenesis by sequestrating E proteins, inhibiting trans-activation by MEF2, and inhibiting DNA-binding by MYOD1 through physical interaction. This interaction probably involves the basic domains of both proteins. Also represses expression of pro-inflammatory cytokines such as TNFA and IL1B. Regulates cranial suture patterning and fusion. Activates transcription as a heterodimer with E proteins. Regulates gene expression differentially, depending on dimer composition. Homodimers induce expression of FGFR2 and POSTN while heterodimers repress FGFR2 and POSTN expression and induce THBS1 expression. Heterodimerization is also required for osteoblast differentiation. Represses the activity of the circadian transcriptional activator: NPAS2-BMAL1 heterodimer. The polypeptide is Twist-related protein 1 (TWIST1) (Gorilla gorilla gorilla (Western lowland gorilla)).